A 311-amino-acid polypeptide reads, in one-letter code: Ribosomal RNA small subunit methyltransferase H (311 aa).

S-adenosyl-L-methionine-binding positions include 32–34, Asp52, Phe79, Asp100, and Gln107; that span reads AGH. A compositionally biased stretch (basic and acidic residues) spans 289–298; sequence SKEELEENNR. The disordered stretch occupies residues 289–311; that stretch reads SKEELEENNRARSAKLRIAEKRK. Over residues 300–311 the composition is skewed to basic residues; the sequence is RSAKLRIAEKRK.

The protein belongs to the methyltransferase superfamily. RsmH family.

The protein resides in the cytoplasm. It carries out the reaction cytidine(1402) in 16S rRNA + S-adenosyl-L-methionine = N(4)-methylcytidine(1402) in 16S rRNA + S-adenosyl-L-homocysteine + H(+). Functionally, specifically methylates the N4 position of cytidine in position 1402 (C1402) of 16S rRNA. This Bacillus velezensis (strain DSM 23117 / BGSC 10A6 / LMG 26770 / FZB42) (Bacillus amyloliquefaciens subsp. plantarum) protein is Ribosomal RNA small subunit methyltransferase H.